The chain runs to 91 residues: Small ribosomal subunit protein uS19 (91 aa).

The protein belongs to the universal ribosomal protein uS19 family.

Functionally, protein S19 forms a complex with S13 that binds strongly to the 16S ribosomal RNA. The polypeptide is Small ribosomal subunit protein uS19 (Prochlorococcus marinus (strain MIT 9515)).